A 1149-amino-acid polypeptide reads, in one-letter code: MACPWNFLWKLKSSRYDLTEEKDINNNVGKASHLYSPEIQDDPKYCSPGKHQNGSSQSLTGTAKKVPESQSKPHKPSPTCSQHMKIKNWGNGMILQDTLHTKAKTNFTCKPKSCLGSVMNPRSMTRGPRDTPIPPDELLPQAIEFVNQYYDSFKEAKIEEYLARVETVTKEIETTGTYQLTGDELIFATKLAWRNAPRCIGRIQWSNLQVFDARSCHTAQEMFEHICRHVRYSTNNGNIRSAITVFPQRTDGKHDFRVWNAQLIRYAGYQMPDGTIQGDPANLEFTQLCIDLGWKPRYGRFDVLPLILQADGRDPELFEIPPDLVLEVPMEHPKYEWFQDLGLKWYALPAVANMLLEVGGLEFPACPFNGWYMGTEIGVRDFCDAQRYNILEEVGRRMGLETHTLASLWKDRAVTEINVAVLHSFQKQNVTIMDHHSAAESFMKHMQNEYRARGGCPADWIWLVPPISGSITPVFHQEMLNYILSPFYYYQVEAWKTHVWQDETRRPKRREIPFRVLAKATLFASLLMRKMMASRVRATILFATETGKSEALAQDLGALFSCAFNPKVLCMDQYQLSSLEEEKLLLVVTSTFGNGDCPGNGETLKKSLFVLKKLTNTFRYAVFGLGSSMYPRFCAFAHDIDIKLSQLGASQLTPVGEGDELSGQEDAFCTWAVQTFQAACAAFDVRGRHHITIPKRYTSSVTWEPYHYRLVQDSQPLDLNKALSRMHATDVFTMRLKSQKNLQSPKSSRTTLLMELSCDDSRSLAYLPGEHLGVFPCNQPALVQGILECVVDNPGPHHTVCLEVLDDSGSYWAKDKRLPPCSLSQALTYFLDITTPPTQLQLQKLARLATEQAERLRLESLSQPSEYNKWKFTNSPTFLEVLEEFPSLRVPAAFLLSQLPILKPRYYSISSSLDHTPAEVHLTVAVVTYRTRDGRGPLHHGVCSTWFSGLKPQDPVPCLVRSVNSFQLPKDPSQPCILIGPGTGIAPFRSFWQQRLHNLKHTGLQGGRMTLLFGCRHPEEDHIYKEEMQEMVQKGVLHEVHTAYSRLPGKPKAYVQDILRQQLAREVLRVLHEEPGHLYVCGNVLMAQDVACTLKQLLAAKLNLNEEQVEDYFFQLKSQKRYHEDIFGAVFPHGVKKDRAERPPGDDKL.

A disordered region spans residues 22 to 83 (KDINNNVGKA…HKPSPTCSQH (62 aa)). A DINNN-motif; mediates interaction with SPSB1, SPSB2 and SPSB4 motif is present at residues 23-27 (DINNN). A compositionally biased stretch (polar residues) spans 50–61 (KHQNGSSQSLTG). Residues C109 and C114 each contribute to the Zn(2+) site. (6R)-L-erythro-5,6,7,8-tetrahydrobiopterin is bound at residue S117. Residue C199 coordinates heme b. Residues Q262, W371, Y372, and E376 each contribute to the L-arginine site. (6R)-L-erythro-5,6,7,8-tetrahydrobiopterin-binding residues include R380, I461, W462, and F475. Y490 contacts heme b. The tract at residues 514 to 534 (FRVLAKATLFASLLMRKMMAS) is calmodulin-binding. A Flavodoxin-like domain is found at 538 to 676 (ATILFATETG…AFCTWAVQTF (139 aa)). FMN is bound by residues T544, E545, T546, K548, and S549. Position 574 is a phosphotyrosine (Y574). S590, T591, S627, R632, C634, E660, and Q664 together coordinate FMN. In terms of domain architecture, FAD-binding FR-type spans 729–969 (TDVFTMRLKS…VRSVNSFQLP (241 aa)). Position 749 (R749) interacts with NADP(+). FAD is bound by residues H771, R905, Y907, S908, T923, and A925. T928 is an NADP(+) binding site. The FAD site is built by Y929, V942, C943, and S944. The NADP(+) site is built by T983, R1016, S1045, R1046, K1052, Y1054, Q1056, and D1089.

The protein belongs to the NOS family. Homodimer. Interacts with NHERF1. Interacts with GAPDH; induced by oxidatively-modified low-densitity lipoprotein (LDL(ox)). Interacts with S100A8 and S100A9 to form the iNOS-S100A8/9 transnitrosylase complex. Interacts with SPSB1, SPSB2 and SPSB4. Interacts with ELOC and CUL5 in the presence of SPSB1 or SPSB2 or SPSB4. Forms a complex with ASL, ASS1 and HSP90AA1; the complex regulates cell-autonomous L-arginine synthesis and citrulline recycling while channeling extracellular L-arginine to nitric oxide synthesis pathway. The cofactor is heme b. It depends on FAD as a cofactor. FMN is required as a cofactor. Requires (6R)-L-erythro-5,6,7,8-tetrahydrobiopterin as cofactor. Post-translationally, polyubiquitinated; mediated by SPSB1, SPSB2 and SPSB4, leading to proteasomal degradation. Expressed in the lung and colon. Not detected in the heart, aorta, liver, kidney, and spleen.

It localises to the cytoplasm. It is found in the cytosol. It catalyses the reaction 2 L-arginine + 3 NADPH + 4 O2 + H(+) = 2 L-citrulline + 2 nitric oxide + 3 NADP(+) + 4 H2O. Its activity is regulated as follows. Regulated by calcium/calmodulin. In terms of biological role, produces nitric oxide (NO) which is a messenger molecule with diverse functions throughout the body. In macrophages, NO mediates tumoricidal and bactericidal actions. Also has nitrosylase activity and mediates cysteine S-nitrosylation of cytoplasmic target proteins such PTGS2/COX2. As component of the iNOS-S100A8/9 transnitrosylase complex involved in the selective inflammatory stimulus-dependent S-nitrosylation of GAPDH implicated in regulation of the GAIT complex activity and probably multiple targets including ANXA5, EZR, MSN and VIM. Involved in inflammation, enhances the synthesis of pro-inflammatory mediators such as IL6 and IL8. This Cavia porcellus (Guinea pig) protein is Nitric oxide synthase, inducible (NOS2).